A 30-amino-acid chain; its full sequence is uncharacterized protein (30 aa).

Residues 9–26 traverse the membrane as a helical segment; sequence YRLVIIVLISVYYRYRFF.

It localises to the plastid. It is found in the chloroplast membrane. This is an uncharacterized protein from Marchantia polymorpha (Common liverwort).